Consider the following 65-residue polypeptide: Large ribosomal subunit protein uL30 (65 aa).

Belongs to the universal ribosomal protein uL30 family. In terms of assembly, part of the 50S ribosomal subunit.

This is Large ribosomal subunit protein uL30 from Brucella suis (strain ATCC 23445 / NCTC 10510).